Reading from the N-terminus, the 656-residue chain is Macrolide export ATP-binding/permease protein MacB (656 aa).

An ABC transporter domain is found at 6–244 (LEVSACYRSF…VKAQVDMSLA (239 aa)). 42–49 (GASGSGKS) serves as a coordination point for ATP. Helical transmembrane passes span 277–297 (FLTM…VALG), 531–551 (LLIS…VMNI), 586–606 (LVCL…GVVF), and 621–641 (SIVA…FLPA).

The protein belongs to the ABC transporter superfamily. Macrolide exporter (TC 3.A.1.122) family. Homodimer. Part of the tripartite efflux system MacAB-TolC, which is composed of an inner membrane transporter, MacB, a periplasmic membrane fusion protein, MacA, and an outer membrane component, TolC. The complex forms a large protein conduit and can translocate molecules across both the inner and outer membranes. Interacts with MacA.

The protein resides in the cell inner membrane. Part of the tripartite efflux system MacAB-TolC. MacB is a non-canonical ABC transporter that contains transmembrane domains (TMD), which form a pore in the inner membrane, and an ATP-binding domain (NBD), which is responsible for energy generation. Confers resistance against macrolides. This is Macrolide export ATP-binding/permease protein MacB from Shewanella oneidensis (strain ATCC 700550 / JCM 31522 / CIP 106686 / LMG 19005 / NCIMB 14063 / MR-1).